We begin with the raw amino-acid sequence, 1533 residues long: Protein TALPID3 (1533 aa).

The interval 32–57 is disordered; the sequence is LSANKRLPVGTGTSLNGTSRGSSDLT. The segment covering 42 to 57 has biased composition (polar residues); the sequence is TGTSLNGTSRGSSDLT. The stretch at 182-223 forms a coiled coil; that stretch reads QSDLEAKVNSVTELLSKLQETDKHLQRVTEQQTSIQRKQEKL. A compositionally biased stretch (basic and acidic residues) spans 309 to 321; sequence KEVEDTSFDKQKS. Disordered stretches follow at residues 309–339 and 377–400; these read KEVEDTSFDKQKSPLETPAPRRFAPVPVSRD and LTRKSESSNTTSLTRSKIGWTPEK. Phosphoserine is present on Ser-406. A coiled-coil region spans residues 467 to 501; that stretch reads SVLKDAEKILRGVQNNKKVLEENLEAIIRAKDGAA. The segment at 467–554 is required for centrosomal localization; that stretch reads SVLKDAEKIL…YEQKRFDQKN (88 aa). The segment at 546-575 is disordered; the sequence is EQKRFDQKNQRTKKGQNMTKDIRTNTQDKT. Positions 560–575 are enriched in polar residues; it reads GQNMTKDIRTNTQDKT. Thr-1042 and Thr-1046 each carry phosphothreonine. Residue Ser-1050 is modified to Phosphoserine. Thr-1063 is subject to Phosphothreonine. The residue at position 1066 (Ser-1066) is a Phosphoserine. The tract at residues 1129–1156 is disordered; sequence SSPELPKPWGDGDLPLEEENPNSPQEEL.

Belongs to the TALPID3 family. Interacts with CCP110, CEP290, CEP97, KIF24. Ubiquitously expressed. Expressed in photoreceptor cells (at protein level).

The protein resides in the cytoplasm. It localises to the cytoskeleton. It is found in the microtubule organizing center. Its subcellular location is the centrosome. The protein localises to the photoreceptor inner segment. The protein resides in the centriole. It localises to the cilium basal body. Functionally, required for ciliogenesis and sonic hedgehog/SHH signaling. Required for the centrosomal recruitment of RAB8A and for the targeting of centriole satellite proteins to centrosomes such as of PCM1. May play a role in early ciliogenesis in the disappearance of centriolar satellites that preceeds ciliary vesicle formation. Involved in regulation of cell intracellular organization. Involved in regulation of cell polarity. Required for asymmetrical localization of CEP120 to daughter centrioles. The polypeptide is Protein TALPID3 (KIAA0586) (Homo sapiens (Human)).